A 352-amino-acid chain; its full sequence is UDP-3-O-acylglucosamine N-acyltransferase (352 aa).

The active-site Proton acceptor is the histidine 257.

The protein belongs to the transferase hexapeptide repeat family. LpxD subfamily. In terms of assembly, homotrimer.

It carries out the reaction a UDP-3-O-[(3R)-3-hydroxyacyl]-alpha-D-glucosamine + a (3R)-hydroxyacyl-[ACP] = a UDP-2-N,3-O-bis[(3R)-3-hydroxyacyl]-alpha-D-glucosamine + holo-[ACP] + H(+). Its pathway is bacterial outer membrane biogenesis; LPS lipid A biosynthesis. Catalyzes the N-acylation of UDP-3-O-acylglucosamine using 3-hydroxyacyl-ACP as the acyl donor. Is involved in the biosynthesis of lipid A, a phosphorylated glycolipid that anchors the lipopolysaccharide to the outer membrane of the cell. The polypeptide is UDP-3-O-acylglucosamine N-acyltransferase (Methylobacterium sp. (strain 4-46)).